The following is a 130-amino-acid chain: Immunoglobulin kappa chain variable 9-120 (130 aa).

An N-terminal signal peptide occupies residues 1 to 22 (MDMRAPAQIFGFLLLLFQGTRC). The framework-1 stretch occupies residues 23–45 (DIQMTQSPSSLSASLGERVSLTC). Cys45 and Cys110 are oxidised to a cystine. The complementarity-determining-1 stretch occupies residues 46 to 56 (RASQDIGSSLN). The segment at 57–71 (WLQQEPDGTIKRLIY) is framework-2. The complementarity-determining-2 stretch occupies residues 72–78 (ATSSLDS). Residues 79-110 (GVPKRFSGSRSGSDYSLTISSLESEDFVDYYC) form a framework-3 region. The interval 111–119 (LQYASSPWT) is complementarity-determining-3. The interval 120–129 (FGGGTKLEIK) is framework-4.

The polypeptide is Immunoglobulin kappa chain variable 9-120 (Mus musculus (Mouse)).